A 187-amino-acid chain; its full sequence is Large ribosomal subunit protein uL5 (187 aa).

Belongs to the universal ribosomal protein uL5 family. Part of the 50S ribosomal subunit; part of the 5S rRNA/L5/L18/L25 subcomplex. Contacts the 5S rRNA and the P site tRNA. Forms a bridge to the 30S subunit in the 70S ribosome.

Its function is as follows. This is one of the proteins that bind and probably mediate the attachment of the 5S RNA into the large ribosomal subunit, where it forms part of the central protuberance. In the 70S ribosome it contacts protein S13 of the 30S subunit (bridge B1b), connecting the 2 subunits; this bridge is implicated in subunit movement. Contacts the P site tRNA; the 5S rRNA and some of its associated proteins might help stabilize positioning of ribosome-bound tRNAs. This Mycobacteroides abscessus (strain ATCC 19977 / DSM 44196 / CCUG 20993 / CIP 104536 / JCM 13569 / NCTC 13031 / TMC 1543 / L948) (Mycobacterium abscessus) protein is Large ribosomal subunit protein uL5.